The sequence spans 433 residues: Ribosome biogenesis protein WDR12 homolog (433 aa).

M1 carries the post-translational modification N-acetylmethionine. Residues 12-96 (LHVKFVTKLD…ERTLEIEYIR (85 aa)) are ubiquitin-like (UBL) domain. WD repeat units lie at residues 108-146 (LHDDWVSAVNGSSPRFILTGCYDGLGRVWSSAGSCSHIL), 148-191 (GHSG…SVDS), 203-242 (GHKASVQSVSAQKSGNMVCSSSWDCTINLWNTNESTSEGE), 270-308 (GHTQCVSSVVWPEHDVIYSSSWDHSVRRWDVETGKDSLN), 310-350 (FCGK…TSAP), 356-396 (SHSS…PLSV), and 399-433 (THNDKVLSADWWKGESVVSGGADSNLRISSGIAIS). A disordered region spans residues 238–263 (TSEGESVSVKKRKGNNQAEESQSEGE).

Belongs to the WD repeat WDR12/YTM1 family. As to quaternary structure, interacts with PES. Interacts with BOP1.

Its subcellular location is the nucleus. It is found in the nucleolus. The protein localises to the nucleoplasm. Required for maturation of ribosomal RNAs and formation of the large ribosomal subunit. This is Ribosome biogenesis protein WDR12 homolog from Arabidopsis thaliana (Mouse-ear cress).